The chain runs to 153 residues: 3-hydroxyacyl-[acyl-carrier-protein] dehydratase FabZ (153 aa).

The active site involves histidine 57.

It belongs to the thioester dehydratase family. FabZ subfamily.

Its subcellular location is the cytoplasm. It carries out the reaction a (3R)-hydroxyacyl-[ACP] = a (2E)-enoyl-[ACP] + H2O. Functionally, involved in unsaturated fatty acids biosynthesis. Catalyzes the dehydration of short chain beta-hydroxyacyl-ACPs and long chain saturated and unsaturated beta-hydroxyacyl-ACPs. This chain is 3-hydroxyacyl-[acyl-carrier-protein] dehydratase FabZ, found in Xanthomonas campestris pv. campestris (strain 8004).